The sequence spans 281 residues: NADPH-dependent 7-cyano-7-deazaguanine reductase (281 aa).

87-89 (IES) is a binding site for substrate. 89–90 (SK) contributes to the NADPH binding site. The active-site Thioimide intermediate is cysteine 188. The Proton donor role is filled by aspartate 195. Residue 227–228 (HE) participates in substrate binding. Position 256 to 257 (256 to 257 (RG)) interacts with NADPH. The segment at 261–281 (INPYRSTEQAKPDHNHRMARQ) is disordered. A compositionally biased stretch (basic and acidic residues) spans 268–281 (EQAKPDHNHRMARQ).

The protein belongs to the GTP cyclohydrolase I family. QueF type 2 subfamily. Homodimer.

The protein resides in the cytoplasm. It carries out the reaction 7-aminomethyl-7-carbaguanine + 2 NADP(+) = 7-cyano-7-deazaguanine + 2 NADPH + 3 H(+). It participates in tRNA modification; tRNA-queuosine biosynthesis. In terms of biological role, catalyzes the NADPH-dependent reduction of 7-cyano-7-deazaguanine (preQ0) to 7-aminomethyl-7-deazaguanine (preQ1). The chain is NADPH-dependent 7-cyano-7-deazaguanine reductase from Vibrio vulnificus (strain CMCP6).